The following is a 279-amino-acid chain: uncharacterized protein (279 aa).

Residues 1–87 form the Reverse transcriptase domain; the sequence is MRVNGRNLTN…DEYIYLGRQI (87 aa).

This is an uncharacterized protein from Caenorhabditis elegans.